Consider the following 191-residue polypeptide: Hypoxanthine/guanine phosphoribosyltransferase (191 aa).

It belongs to the purine/pyrimidine phosphoribosyltransferase family. Archaeal HPRT subfamily. As to quaternary structure, homodimer.

It is found in the cytoplasm. The catalysed reaction is IMP + diphosphate = hypoxanthine + 5-phospho-alpha-D-ribose 1-diphosphate. The enzyme catalyses GMP + diphosphate = guanine + 5-phospho-alpha-D-ribose 1-diphosphate. Its pathway is purine metabolism; IMP biosynthesis via salvage pathway; IMP from hypoxanthine: step 1/1. Functionally, catalyzes a salvage reaction resulting in the formation of IMP that is energically less costly than de novo synthesis. In Methanocella arvoryzae (strain DSM 22066 / NBRC 105507 / MRE50), this protein is Hypoxanthine/guanine phosphoribosyltransferase.